We begin with the raw amino-acid sequence, 451 residues long: MSFVPGQENAGSRSSSGNRAGNGILKKTTWADQTERGNRGRRNHPKQTATTQPNAGSVVPHYSWFSGITQFQKGKEFQFAQGQGVPIASGIPASEQKGYWYRHNRRSFKTPDGQHKQLLPRWYFYYLGTGPHAGAEYGDDIEGVVWVASQQADTKTTADVVERDPSSHEAIPTRFAPGTVLPQGFYVEGSGRSAPASRSGSRSQSRGPNNRARSSSNQRQPASAVKPDMAEEIAALVLAKLGKDAGQPKQVTKQSAKEVRQKILTKPRQKRTPNKQCPVQQCFGKRGPNQNFGGSEMLKLGTSDPQFPILAELAPTPSAFFFGSKLELVKKNSGGADEPTKDVYELQYSGAIRFDSTLPGFETIMKVLTENLNAYQDQAGSVDLVSPKPPRRGRRQAQEKKDEVDNVSVAKPKSLVQRNVSRELTPEDRSLLAQILDDGVVPDGLEDDSNV.

Residues 1 to 57 (MSFVPGQENAGSRSSSGNRAGNGILKKTTWADQTERGNRGRRNHPKQTATTQPNAGS) form a disordered region. Over residues 9-23 (NAGSRSSSGNRAGNG) the composition is skewed to low complexity. Residues 46 to 55 (KQTATTQPNA) are compositionally biased toward polar residues. The RNA-binding stretch occupies residues 52–193 (QPNAGSVVPH…GFYVEGSGRS (142 aa)). In terms of domain architecture, CoV N NTD spans 60 to 189 (PHYSWFSGIT…VLPQGFYVEG (130 aa)). Positions 105, 121, and 163 each coordinate RNA. 3 disordered regions span residues 155-227 (KTTA…AVKP), 266-288 (KPRQ…KRGP), and 379-423 (AGSV…VSRE). S166 bears the Phosphoserine; by host mark. At T173 the chain carries Phosphothreonine; by host. Low complexity predominate over residues 189–208 (GSGRSAPASRSGSRSQSRGP). Phosphoserine; by host is present on S190. Positions 211 to 221 (RARSSSNQRQP) are enriched in polar residues. The 124-residue stretch at 256-379 (AKEVRQKILT…ENLNAYQDQA (124 aa)) folds into the CoV N CTD domain. The tract at residues 263–380 (ILTKPRQKRT…NLNAYQDQAG (118 aa)) is dimerization. 2 positions are modified to phosphoserine; by host: S386 and S421. The residue at position 425 (T425) is a Phosphothreonine; by host.

This sequence belongs to the betacoronavirus nucleocapsid protein family. Homooligomer. Both monomeric and oligomeric forms interact with RNA. Interacts with protein M. Interacts with NSP3; this interaction serves to tether the genome to the newly translated replicase-transcriptase complex at a very early stage of infection. Post-translationally, ADP-ribosylated. The ADP-ribosylation is retained in the virion during infection. Phosphorylated on serine and threonine residues.

The protein localises to the virion. The protein resides in the host endoplasmic reticulum-Golgi intermediate compartment. It localises to the host Golgi apparatus. In terms of biological role, packages the positive strand viral genome RNA into a helical ribonucleocapsid (RNP) and plays a fundamental role during virion assembly through its interactions with the viral genome and membrane protein M. Plays an important role in enhancing the efficiency of subgenomic viral RNA transcription as well as viral replication. This chain is Nucleoprotein, found in Murine coronavirus (strain 2) (MHV-2).